Here is a 551-residue protein sequence, read N- to C-terminus: Cilia- and flagella-associated protein 45 (551 aa).

Disordered regions lie at residues 1–52, 232–256, and 385–415; these read MPLR…KSDS, MEIDRRESLQRQEDRERKRREERVR, and EQDALRAKRNQEVADREWRRKEKENAQKKIE. Residues 8–18 are compositionally biased toward low complexity; it reads ASSSASTASNR. Positions 276–524 form a coiled coil; that stretch reads AEHREQEKEQ…EDIKKQKLEE (249 aa). Over residues 387–415 the composition is skewed to basic and acidic residues; sequence DALRAKRNQEVADREWRRKEKENAQKKIE.

This sequence belongs to the CFAP45 family. As to quaternary structure, microtubule inner protein component of sperm flagellar doublet microtubules. Interacts with AK8; dimerization with AK8 may create a cavity at the interface of the dimer that can accommodate AMP. Interacts with CFAP52. Interacts with ENKUR. Directly interacts with DNALI1. Interacts with DNAH11. Interacts with DNAI1. As to expression, expressed in respiratory cells and in sperm (at protein level).

It is found in the cytoplasm. It localises to the cytoskeleton. The protein localises to the cilium axoneme. Its subcellular location is the flagellum axoneme. The protein resides in the cell projection. It is found in the cilium. It localises to the flagellum. Its function is as follows. Microtubule inner protein (MIP) part of the dynein-decorated doublet microtubules (DMTs) in cilia axoneme, which is required for motile cilia beating. It is an AMP-binding protein that may facilitate dynein ATPase-dependent ciliary and flagellar beating via adenine nucleotide homeostasis. May function as a donor of AMP to AK8 and hence promote ADP production. The chain is Cilia- and flagella-associated protein 45 (Cfap45) from Mus musculus (Mouse).